We begin with the raw amino-acid sequence, 320 residues long: Ferrochelatase (320 aa).

His194 and Glu275 together coordinate Fe cation.

Belongs to the ferrochelatase family. As to quaternary structure, monomer.

The protein resides in the cytoplasm. The enzyme catalyses heme b + 2 H(+) = protoporphyrin IX + Fe(2+). The protein operates within porphyrin-containing compound metabolism; protoheme biosynthesis; protoheme from protoporphyrin-IX: step 1/1. Functionally, catalyzes the ferrous insertion into protoporphyrin IX. This chain is Ferrochelatase, found in Salmonella typhi.